A 203-amino-acid chain; its full sequence is Endothelin-1 (203 aa).

Residues Met-1 to Gly-25 form the signal peptide. Positions Ala-26 to Ser-50 are excised as a propeptide. Residues Glu-27 to Arg-48 form a disordered region. 2 disulfide bridges follow: Cys-53/Cys-67 and Cys-55/Cys-63. Positions Tyr-83–His-203 are excised as a propeptide. The endothelin-like stretch occupies residues Cys-110–Cys-124. The N-linked (GlcNAc...) asparagine glycan is linked to Asn-200.

This sequence belongs to the endothelin/sarafotoxin family.

It is found in the secreted. In terms of biological role, endothelins are endothelium-derived vasoconstrictor peptides. Probable ligand for G-protein coupled receptors EDNRA and EDNRB which activates PTK2B, BCAR1, BCAR3 and, GTPases RAP1 and RHOA cascade in glomerular mesangial cells. Also binds the DEAR/FBXW7-AS1 receptor. Promotes mesenteric arterial wall remodeling via activation of ROCK signaling and subsequent colocalization of NFATC3 with F-actin filaments. NFATC3 then translocates to the nucleus where it subsequently promotes the transcription of the smooth muscle hypertrophy and differentiation marker ACTA2. The sequence is that of Endothelin-1 (EDN1) from Sus scrofa (Pig).